The following is a 132-amino-acid chain: Small ribosomal subunit protein uS8 (132 aa).

This sequence belongs to the universal ribosomal protein uS8 family. In terms of assembly, part of the 30S ribosomal subunit. Contacts proteins S5 and S12.

Functionally, one of the primary rRNA binding proteins, it binds directly to 16S rRNA central domain where it helps coordinate assembly of the platform of the 30S subunit. The protein is Small ribosomal subunit protein uS8 of Halalkalibacterium halodurans (strain ATCC BAA-125 / DSM 18197 / FERM 7344 / JCM 9153 / C-125) (Bacillus halodurans).